An 88-amino-acid polypeptide reads, in one-letter code: Small ribosomal subunit protein bS20 (88 aa).

2 disordered regions span residues 1–25 and 61–88; these read MANSPQAKKRARQNERRFAINKARR and GVTKGVMHKNTAARKMSRLSSRVKALGA.

The protein belongs to the bacterial ribosomal protein bS20 family.

Functionally, binds directly to 16S ribosomal RNA. This is Small ribosomal subunit protein bS20 from Jannaschia sp. (strain CCS1).